The sequence spans 507 residues: Cystathionine beta-synthase (507 aa).

Position 53 is an N6-(pyridoxal phosphate)lysine (K53). Residue N84 coordinates pyridoxal 5'-phosphate. A Phosphoserine modification is found at S134. Pyridoxal 5'-phosphate contacts are provided by residues 196 to 200 and S289; that span reads GTGGT. Phosphoserine is present on residues S350 and S424. In terms of domain architecture, CBS spans 373 to 432; that stretch reads HLKPVVSVKETAKVTDVIKILKDNGFDQLPVLTEDGKLSGLVTLSELLRKLSINNSNNDN.

Belongs to the cysteine synthase/cystathionine beta-synthase family. It depends on pyridoxal 5'-phosphate as a cofactor.

The catalysed reaction is L-homocysteine + L-serine = L,L-cystathionine + H2O. It participates in amino-acid biosynthesis; L-cysteine biosynthesis; L-cysteine from L-homocysteine and L-serine: step 1/2. In Saccharomyces cerevisiae (strain ATCC 204508 / S288c) (Baker's yeast), this protein is Cystathionine beta-synthase (CYS4).